Consider the following 199-residue polypeptide: MSSPPSSLDELIAALRCLPGVGPKSAQRMAYHLLQRDQRGAARLAGALGHALEVLRHCQRCNNFSEEAVCQRCANPRRDPATLCVVEMPADLAMIEQTQSYNGLYYVLMGRLSPLDGVGPRELGLERLIARATDGEVKEVILATNFTNEGEATAHTVATLLGARGVKVSRISRGVPVGGELEHTDTGTIAQALVERRAF.

The segment at 58–73 adopts a C4-type zinc-finger fold; sequence CQRCNNFSEEAVCQRC. Positions 81 to 176 constitute a Toprim domain; it reads ATLCVVEMPA…KVSRISRGVP (96 aa).

It belongs to the RecR family.

Its function is as follows. May play a role in DNA repair. It seems to be involved in an RecBC-independent recombinational process of DNA repair. It may act with RecF and RecO. In Azoarcus sp. (strain BH72), this protein is Recombination protein RecR.